The primary structure comprises 98 residues: Integration host factor subunit alpha (98 aa).

The tract at residues 49–70 is disordered; it reads FGNFDLRDKNQRPGRNPKTGED.

Belongs to the bacterial histone-like protein family. As to quaternary structure, heterodimer of an alpha and a beta chain.

Its function is as follows. This protein is one of the two subunits of integration host factor, a specific DNA-binding protein that functions in genetic recombination as well as in transcriptional and translational control. In Yersinia pestis, this protein is Integration host factor subunit alpha.